Reading from the N-terminus, the 77-residue chain is Small ribosomal subunit protein bS21 (77 aa).

Belongs to the bacterial ribosomal protein bS21 family.

The chain is Small ribosomal subunit protein bS21 from Bartonella tribocorum (strain CIP 105476 / IBS 506).